Reading from the N-terminus, the 4244-residue chain is Tenascin-X (4244 aa).

A signal peptide spans 1–23 (MMPAQYALTSSLVLLVLLSTARA). Positions 27-57 (SSRSNVTLPAPRPPPQPGGHTVGAGVGSPSS) are disordered. Asparagine 31 carries an N-linked (GlcNAc...) asparagine glycan. One can recognise an EGF-like 1; incomplete domain in the interval 156–168 (CSCEPGWGGPTCS). Residues 169-189 (DPTDAEIPPSSPPSASGSCPD) are disordered. 18 consecutive EGF-like domains span residues 183–213 (ASGSCPDDCNDQGRCVRGRCVCFPGYTGPSC), 214–244 (GWPSCPGDCQGRGRCVQGVCVCRAGFSGPDC), 245–275 (SQRSCPRGCSQRGRCEGGRCVCDPGYTGDDC), 276–306 (GMRSCPRGCSQRGRCENGRCVCNPGYTGEDC), 307–337 (GVRSCPRGCSQRGRCKDGRCVCDPGYTGEDC), 338–368 (GTRSCPWDCGEGGRCVDGRCVCWPGYTGEDC), 369–399 (STRTCPRDCRGRGRCEDGECICDTGYSGDDC), 400–430 (GVRSCPGDCNQRGRCEDGRCVCWPGYTGTDC), 431–461 (GSRACPRDCRGRGRCENGVCVCNAGYSGEDC), 462–492 (GVRSCPGDCRGRGRCESGRCMCWPGYTGRDC), 493–523 (GTRACPGDCRGRGRCVDGRCVCNPGFTGEDC), 524–554 (GSRRCPGDCRGHGLCEDGVCVCDAGYSGEDC), 555–585 (STRSCPGGCRGRGQCLDGRCVCEDGYSGEDC), 586–616 (GVRQCPNDCSQHGVCQDGVCICWEGYVSEDC), 617–647 (SIRTCPSNCHGRGRCEEGRCLCDPGYTGPTC), 648–679 (ATRMCPADCRGRGRCVQGVCLCHVGYGGEDCG), 684–714 (PASACPGGCGPRELCRAGQCVCVEGFRGPDC), and 715–746 (AIQTCPGDCRGRGECHDGSCVCKDGYAGEDCG). 54 cysteine pairs are disulfide-bonded: cysteine 187–cysteine 197, cysteine 191–cysteine 202, cysteine 204–cysteine 213, cysteine 218–cysteine 228, cysteine 222–cysteine 233, cysteine 235–cysteine 244, cysteine 249–cysteine 259, cysteine 253–cysteine 264, cysteine 266–cysteine 275, cysteine 280–cysteine 290, cysteine 284–cysteine 295, cysteine 297–cysteine 306, cysteine 311–cysteine 321, cysteine 315–cysteine 326, cysteine 328–cysteine 337, cysteine 342–cysteine 352, cysteine 346–cysteine 357, cysteine 359–cysteine 368, cysteine 373–cysteine 383, cysteine 377–cysteine 388, cysteine 390–cysteine 399, cysteine 404–cysteine 414, cysteine 408–cysteine 419, cysteine 421–cysteine 430, cysteine 435–cysteine 445, cysteine 439–cysteine 450, cysteine 452–cysteine 461, cysteine 466–cysteine 476, cysteine 470–cysteine 481, cysteine 483–cysteine 492, cysteine 497–cysteine 507, cysteine 501–cysteine 512, cysteine 514–cysteine 523, cysteine 528–cysteine 538, cysteine 532–cysteine 543, cysteine 545–cysteine 554, cysteine 559–cysteine 569, cysteine 563–cysteine 574, cysteine 576–cysteine 585, cysteine 590–cysteine 600, cysteine 594–cysteine 605, cysteine 607–cysteine 616, cysteine 621–cysteine 631, cysteine 625–cysteine 636, cysteine 638–cysteine 647, cysteine 652–cysteine 662, cysteine 656–cysteine 667, cysteine 669–cysteine 678, cysteine 688–cysteine 698, cysteine 692–cysteine 703, cysteine 705–cysteine 714, cysteine 719–cysteine 729, cysteine 723–cysteine 734, and cysteine 736–cysteine 745. Residues 926 to 956 (TGSSPLGLLGTTDEPPPSGPSTTQGAQAPLL) form a disordered region. Fibronectin type-III domains lie at 959–1051 (RPQE…IMDK), 1064–1153 (RLGE…PQSD), 1161–1249 (HLGN…APER), 1263–1352 (LLGE…PQED), 1374–1468 (LLGE…TPPA), 1476–1572 (RLGE…TEAS), 1574–1669 (PPLE…RGDA), 1674–1764 (PPRL…ARSA), 1778–1868 (LGEE…REET), and 1883–1971 (HLGE…VPEE). The segment at 1340–1372 (PESVVAKTAPQEDVDETPSPTELGTEAPESPEE) is disordered. A Cell attachment site motif is present at residues 1666–1668 (RGD). The disordered stretch occupies residues 1752–1777 (PLTADGTTEARSAMDDTGTKRPPKPR). Residues 1968 to 1990 (VPEEEKPSEPPTATPEPPIKPRL) form a disordered region. Residues 1976–1987 (EPPTATPEPPIK) show a composition bias toward pro residues. Fibronectin type-III domains follow at residues 1989-2089 (RLGE…SMEA), 2097-2185 (LLGE…APEE), 2196-2296 (RLGQ…TEPP), 2305-2398 (RLEE…TPSP), and 2408-2502 (PPEE…PQED). The tract at residues 2281 to 2304 (APGKDEEMAPASTEPPTPEPPIKP) is disordered. Residues 2495-2542 (GVTAPQEDVDETPSPTEPGTEAPGPPEEPLLGELTVTGSSPDSLSLSW) are disordered. Low complexity predominate over residues 2506–2516 (TPSPTEPGTEA). 15 consecutive Fibronectin type-III domains span residues 2519-2617 (PPEE…TTQA), 2625-2723 (PPIK…TPSP), 2733-2840 (PPEE…TTPE), 2841-2939 (PPNK…TPAP), 2949-3042 (PPEE…APKD), 3062-3153 (RLGE…TPSP), 3168-3260 (LLGE…TPLP), 3264-3355 (RLGE…TKPS), 3357-3446 (RLGE…PLEK), 3451-3544 (HLGE…TPAP), 3553-3647 (PPEE…LAPA), 3657-3754 (RLSQ…TLSP), 3758-3847 (SPRD…VPDG), 3848-3934 (PTQL…TGLE), and 3935-4025 (APRD…LRIP). Over residues 2530–2542 (VTGSSPDSLSLSW) the composition is skewed to polar residues. Disordered stretches follow at residues 2824 to 2847 (PEDEAETTQAVPTTTPEPPNKPRL) and 2933 to 2969 (EEETPAPTEPSTEAPEPPEEPLLGELTVTGSSPDSLS). Residues 2937-2946 (PAPTEPSTEA) show a composition bias toward low complexity. Polar residues predominate over residues 2960 to 2969 (VTGSSPDSLS). Disordered regions lie at residues 3536–3559 (APEEDTPAPELAPEAPEPPEEPRL) and 3636–3662 (LSAEGTTGLAPAGQTSEESRPRLSQLS). Asparagine 3855, asparagine 3908, and asparagine 3920 each carry an N-linked (GlcNAc...) asparagine glycan. Residues 4021-4236 (GLRIPFPRDC…FTEMKLRPRN (216 aa)) enclose the Fibrinogen C-terminal domain. Cysteine 4030 and cysteine 4060 are oxidised to a cystine. Residue asparagine 4095 is glycosylated (N-linked (GlcNAc...) asparagine). Cysteines 4182 and 4195 form a disulfide.

Belongs to the tenascin family. As to quaternary structure, homotrimer. Interacts with type I, III and V collagens and tropoelastin via its 29th fibronectin type-III domain. As to expression, highly expressed in fetal adrenal, in fetal testis, fetal smooth, striated and cardiac muscle. Isoform XB-short is only expressed in the adrenal gland.

The protein localises to the secreted. The protein resides in the extracellular space. It localises to the extracellular matrix. In terms of biological role, appears to mediate interactions between cells and the extracellular matrix. Substrate-adhesion molecule that appears to inhibit cell migration. Accelerates collagen fibril formation. May play a role in supporting the growth of epithelial tumors. This chain is Tenascin-X, found in Homo sapiens (Human).